An 81-amino-acid polypeptide reads, in one-letter code: Acylphosphatase (81 aa).

The Acylphosphatase-like domain occupies 1-81 (MYIFHGRVQG…VKYNDFQIRY (81 aa)). Residues R14 and N32 contribute to the active site.

Belongs to the acylphosphatase family.

It catalyses the reaction an acyl phosphate + H2O = a carboxylate + phosphate + H(+). The polypeptide is Acylphosphatase (acyP) (Picrophilus torridus (strain ATCC 700027 / DSM 9790 / JCM 10055 / NBRC 100828 / KAW 2/3)).